A 510-amino-acid polypeptide reads, in one-letter code: Leucine-rich repeat protein lrrA (510 aa).

LRR repeat units lie at residues Tyr-14–Ile-34, Gly-35–Leu-59, Ser-60–Leu-82, Thr-84–Ala-106, Leu-107–Cys-130, Ala-132–Lys-152, Leu-153–Trp-176, Val-177–Gly-200, Leu-202–Met-222, Ser-224–Leu-245, Arg-246–Glu-270, Ile-272–Leu-292, Ile-293–Leu-315, Ile-316–Leu-340, Val-341–Met-363, Ala-365–Leu-386, Ser-387–Asn-408, Ser-410–Leu-432, Lys-433–Leu-458, and Ile-460–Lys-478.

The protein localises to the cytoplasm. Functionally, involved in cytoskeleton remodeling, which is needed for normal chemotactic aggregation and efficient cell sorting during multicellular morphogenesis. The chain is Leucine-rich repeat protein lrrA (lrrA) from Dictyostelium discoideum (Social amoeba).